We begin with the raw amino-acid sequence, 161 residues long: Ubiquitin-conjugating enzyme E2Q-like protein 1 (161 aa).

Residues 1–154 (MKELQDIARL…VKTHEKYGWV (154 aa)) form the UBC core domain. Residue C88 is the Glycyl thioester intermediate of the active site.

This sequence belongs to the ubiquitin-conjugating enzyme family. Interacts with FBXW7.

The protein localises to the nucleus. The enzyme catalyses S-ubiquitinyl-[E1 ubiquitin-activating enzyme]-L-cysteine + [E2 ubiquitin-conjugating enzyme]-L-cysteine = [E1 ubiquitin-activating enzyme]-L-cysteine + S-ubiquitinyl-[E2 ubiquitin-conjugating enzyme]-L-cysteine.. The protein operates within protein modification; protein ubiquitination. In terms of biological role, probable E2 ubiquitin-protein ligase that catalyzes the covalent attachment of ubiquitin to target proteins. May facilitate the monoubiquitination and degradation of MTOR and CCNE1 through interaction with FBXW7. This Mus musculus (Mouse) protein is Ubiquitin-conjugating enzyme E2Q-like protein 1 (Ube2ql1).